The following is a 385-amino-acid chain: A-type ATP synthase subunit C (385 aa).

Belongs to the V-ATPase V0D/AC39 subunit family. In terms of assembly, has multiple subunits with at least A(3), B(3), C, D, E, F, H, I and proteolipid K(x).

The protein resides in the cell membrane. In terms of biological role, component of the A-type ATP synthase that produces ATP from ADP in the presence of a proton gradient across the membrane. The polypeptide is A-type ATP synthase subunit C (Methanosphaera stadtmanae (strain ATCC 43021 / DSM 3091 / JCM 11832 / MCB-3)).